We begin with the raw amino-acid sequence, 122 residues long: Large ribosomal subunit protein uL14 (122 aa).

It belongs to the universal ribosomal protein uL14 family. As to quaternary structure, part of the 50S ribosomal subunit. Forms a cluster with proteins L3 and L19. In the 70S ribosome, L14 and L19 interact and together make contacts with the 16S rRNA in bridges B5 and B8.

Functionally, binds to 23S rRNA. Forms part of two intersubunit bridges in the 70S ribosome. The polypeptide is Large ribosomal subunit protein uL14 (Rhodospirillum centenum (strain ATCC 51521 / SW)).